A 61-amino-acid polypeptide reads, in one-letter code: Defensin BmKDfsin1 (61 aa).

The N-terminal stretch at 1–25 is a signal peptide; that stretch reads MKTIVLLFVLVLVFALLVKMGMVEA. Cystine bridges form between Cys29-Cys50, Cys36-Cys58, and Cys40-Cys60.

This sequence belongs to the invertebrate defensin family. Type 2 subfamily. In terms of tissue distribution, highly expressed in non-venom gland (hemolymph) and moderately expressed in venom gland.

Its subcellular location is the secreted. Antibacterial peptide active against Gram-positive bacteria, but not on Gram-negative bacteria. Also has weak blocking activity on Kv1.1/KCNA1, Kv1.2/KCNA2, Kv1.3/KCNA3, KCa3.1/KCNN4/IK, KCa2.3/KCNN3/SK3 and Kv11.1/KCNH2/ERG1 channels (tested at 1 uM). It inhibits potassium channel current by interacting with the pore region. The chain is Defensin BmKDfsin1 from Olivierus martensii (Manchurian scorpion).